We begin with the raw amino-acid sequence, 344 residues long: Biotin synthase (344 aa).

One can recognise a Radical SAM core domain in the interval proline 65 to arginine 290. Residues cysteine 80, cysteine 84, and cysteine 87 each coordinate [4Fe-4S] cluster. [2Fe-2S] cluster is bound by residues cysteine 123, cysteine 156, cysteine 215, and arginine 285.

It belongs to the radical SAM superfamily. Biotin synthase family. In terms of assembly, homodimer. [4Fe-4S] cluster serves as cofactor. The cofactor is [2Fe-2S] cluster.

It carries out the reaction (4R,5S)-dethiobiotin + (sulfur carrier)-SH + 2 reduced [2Fe-2S]-[ferredoxin] + 2 S-adenosyl-L-methionine = (sulfur carrier)-H + biotin + 2 5'-deoxyadenosine + 2 L-methionine + 2 oxidized [2Fe-2S]-[ferredoxin]. It participates in cofactor biosynthesis; biotin biosynthesis; biotin from 7,8-diaminononanoate: step 2/2. Catalyzes the conversion of dethiobiotin (DTB) to biotin by the insertion of a sulfur atom into dethiobiotin via a radical-based mechanism. The chain is Biotin synthase from Mycolicibacterium paratuberculosis (strain ATCC BAA-968 / K-10) (Mycobacterium paratuberculosis).